The chain runs to 511 residues: Bifunctional purine biosynthesis protein PurH (511 aa).

Positions 1–145 constitute an MGS-like domain; the sequence is MKRRAIISVS…KNHAYVTAVV (145 aa).

It belongs to the PurH family.

The enzyme catalyses (6R)-10-formyltetrahydrofolate + 5-amino-1-(5-phospho-beta-D-ribosyl)imidazole-4-carboxamide = 5-formamido-1-(5-phospho-D-ribosyl)imidazole-4-carboxamide + (6S)-5,6,7,8-tetrahydrofolate. The catalysed reaction is IMP + H2O = 5-formamido-1-(5-phospho-D-ribosyl)imidazole-4-carboxamide. It participates in purine metabolism; IMP biosynthesis via de novo pathway; 5-formamido-1-(5-phospho-D-ribosyl)imidazole-4-carboxamide from 5-amino-1-(5-phospho-D-ribosyl)imidazole-4-carboxamide (10-formyl THF route): step 1/1. It functions in the pathway purine metabolism; IMP biosynthesis via de novo pathway; IMP from 5-formamido-1-(5-phospho-D-ribosyl)imidazole-4-carboxamide: step 1/1. The sequence is that of Bifunctional purine biosynthesis protein PurH from Anoxybacillus flavithermus (strain DSM 21510 / WK1).